A 176-amino-acid polypeptide reads, in one-letter code: Large ribosomal subunit protein uL10 (176 aa).

Belongs to the universal ribosomal protein uL10 family. Part of the ribosomal stalk of the 50S ribosomal subunit. The N-terminus interacts with L11 and the large rRNA to form the base of the stalk. The C-terminus forms an elongated spine to which L12 dimers bind in a sequential fashion forming a multimeric L10(L12)X complex.

Functionally, forms part of the ribosomal stalk, playing a central role in the interaction of the ribosome with GTP-bound translation factors. The polypeptide is Large ribosomal subunit protein uL10 (rplJ) (Streptomyces coelicolor (strain ATCC BAA-471 / A3(2) / M145)).